The chain runs to 95 residues: Large ribosomal subunit protein bL27 (95 aa).

Residues 1–9 (MLKMNLQFF) constitute a propeptide that is removed on maturation.

The protein belongs to the bacterial ribosomal protein bL27 family. In terms of processing, the N-terminus is cleaved by ribosomal processing cysteine protease Prp.

The protein is Large ribosomal subunit protein bL27 of Lachnoclostridium phytofermentans (strain ATCC 700394 / DSM 18823 / ISDg) (Clostridium phytofermentans).